A 463-amino-acid polypeptide reads, in one-letter code: Cis-zeatin O-glucosyltransferase 2 (463 aa).

Residue His21 is the Proton acceptor of the active site. Positions 21 and 91 each coordinate an anthocyanidin. Asp127 (charge relay) is an active-site residue. Residues Ala339, Gln341, His356, Trp359, Asn360, Ser361, Glu364, Asp380, and Gln381 each contribute to the UDP-alpha-D-glucose site.

Belongs to the UDP-glycosyltransferase family. In terms of tissue distribution, highly expressed in root. Expressed at much lower level in kernel. Weakly or not expressed in expressed in stems and leaves.

The catalysed reaction is cis-zeatin + UDP-alpha-D-glucose = O-beta-D-glucosyl-cis-zeatin + UDP + H(+). In terms of biological role, utilizes UDP-glucose as the sugar donor and catalyzes the formation of O-beta-D-glucosyl-cis-zeatin from cis-zeatin. May regulate active versus storage forms of cytokinins and could have an impact on seed growth. The protein is Cis-zeatin O-glucosyltransferase 2 of Zea mays (Maize).